The following is a 559-amino-acid chain: U-box domain-containing protein 41 (559 aa).

2 disordered regions span residues 1–30 (MGGN…KHDE) and 121–156 (RMDK…SPSD). Polar residues predominate over residues 12–24 (HQRSSSATTTTLP). Residues 30–104 (ETPPEFLCPI…FSWCDRQKVD (75 aa)) enclose the U-box domain. 5 ARM repeats span residues 266-305 (EDLR…NLSL), 307-346 (KQNK…SLAL), 348-388 (DENK…HLSL), 390-427 (PSNR…NLAA), and 428-472 (CPDG…TLCQ).

It catalyses the reaction S-ubiquitinyl-[E2 ubiquitin-conjugating enzyme]-L-cysteine + [acceptor protein]-L-lysine = [E2 ubiquitin-conjugating enzyme]-L-cysteine + N(6)-ubiquitinyl-[acceptor protein]-L-lysine.. Its pathway is protein modification; protein ubiquitination. Functions as an E3 ubiquitin ligase. The polypeptide is U-box domain-containing protein 41 (PUB41) (Arabidopsis thaliana (Mouse-ear cress)).